A 335-amino-acid chain; its full sequence is Mycobacterial beta-ketoacyl-[acyl-carrier-protein] synthase III (335 aa).

Active-site residues include Cys-122 and His-258. An ACP-binding region spans residues 259 to 263; it reads QANSR. Residue Asn-289 is part of the active site.

Belongs to the thiolase-like superfamily. FabH family. As to quaternary structure, homodimer.

The protein resides in the cytoplasm. It carries out the reaction malonyl-[ACP] + dodecanoyl-CoA + H(+) = 3-oxotetradecanoyl-[ACP] + CO2 + CoA. It functions in the pathway lipid metabolism; fatty acid biosynthesis. It participates in lipid metabolism; mycolic acid biosynthesis. Catalyzes the condensation reaction of fatty acid synthesis by the addition to an acyl acceptor of two carbons from malonyl-ACP. Catalyzes the first condensation reaction which initiates fatty acid synthesis and may therefore play a role in governing the total rate of fatty acid production. Possesses both acetoacetyl-ACP synthase and acetyl transacylase activities. Its substrate specificity determines the biosynthesis of branched-chain and/or straight-chain of fatty acids. This chain is Mycobacterial beta-ketoacyl-[acyl-carrier-protein] synthase III, found in Mycobacterium ulcerans (strain Agy99).